We begin with the raw amino-acid sequence, 378 residues long: Lipid-A-disaccharide synthase (378 aa).

Belongs to the LpxB family.

The catalysed reaction is a lipid X + a UDP-2-N,3-O-bis[(3R)-3-hydroxyacyl]-alpha-D-glucosamine = a lipid A disaccharide + UDP + H(+). The protein operates within bacterial outer membrane biogenesis; LPS lipid A biosynthesis. Condensation of UDP-2,3-diacylglucosamine and 2,3-diacylglucosamine-1-phosphate to form lipid A disaccharide, a precursor of lipid A, a phosphorylated glycolipid that anchors the lipopolysaccharide to the outer membrane of the cell. The protein is Lipid-A-disaccharide synthase of Pseudomonas aeruginosa (strain UCBPP-PA14).